The sequence spans 338 residues: DNA-directed RNA polymerase subunit alpha (338 aa).

The interval 1 to 225 (MLISQRPTIT…ELFGLARELN (225 aa)) is alpha N-terminal domain (alpha-NTD). The tract at residues 242-338 (YIAAYSMPIE…YIDVEAEDSE (97 aa)) is alpha C-terminal domain (alpha-CTD). Positions 319-338 (LEGYDAETGGYIDVEAEDSE) are disordered.

It belongs to the RNA polymerase alpha chain family. In terms of assembly, homodimer. The RNAP catalytic core consists of 2 alpha, 1 beta, 1 beta' and 1 omega subunit. When a sigma factor is associated with the core the holoenzyme is formed, which can initiate transcription.

It carries out the reaction RNA(n) + a ribonucleoside 5'-triphosphate = RNA(n+1) + diphosphate. In terms of biological role, DNA-dependent RNA polymerase catalyzes the transcription of DNA into RNA using the four ribonucleoside triphosphates as substrates. In Corynebacterium glutamicum (strain ATCC 13032 / DSM 20300 / JCM 1318 / BCRC 11384 / CCUG 27702 / LMG 3730 / NBRC 12168 / NCIMB 10025 / NRRL B-2784 / 534), this protein is DNA-directed RNA polymerase subunit alpha.